Here is a 529-residue protein sequence, read N- to C-terminus: Delayed-rectifier potassium channel regulatory subunit KCNS1 (529 aa).

The Cytoplasmic portion of the chain corresponds to 1–217 (MLMLLVRGTR…LTMENPGYSL (217 aa)). Residues 218 to 239 (PSKLFSCVSISVVLASIAAMCI) form a helical membrane-spanning segment. Topologically, residues 240–270 (HSLPEYQAREAAAAVAAVAAGRSAEGVRDDP) are extracellular. A helical membrane pass occupies residues 271–293 (VLRRLEYFCIAWFSFEVSSRLLL). The Cytoplasmic portion of the chain corresponds to 294 to 304 (APSTRNFFCHP). Residues 305–322 (LNLIDIVSVLPFYLTLLA) form a helical membrane-spanning segment. Residues 323 to 340 (GAALGDHGGTGGKEFGHL) are Extracellular-facing. Residues 341–361 (GKVVQVFRLMRIFRVLKLARH) form a helical; Voltage-sensor membrane-spanning segment. Topologically, residues 362–376 (STGLRSLGATLKHSY) are cytoplasmic. Residues 377–398 (REVGILLLYLAVGVSVFSGVAY) form a helical membrane-spanning segment. The Extracellular portion of the chain corresponds to 399–411 (TAEKEEHVGFDTI). Residues 412–423 (PACWWWGTVSMT) constitute an intramembrane region (helical). The Selectivity filter signature appears at 424–429 (TVGYGD). The stretch at 424-431 (TVGYGDVV) is an intramembrane region. Over 432 to 438 (PVTVAGK) the chain is Extracellular. Residues 439-467 (LAASGCILGGILVVALPITIIFNKFSHFY) traverse the membrane as a helical segment. Residues 468–529 (RRQKALEAAV…PSEPPHSQMY (62 aa)) lie on the Cytoplasmic side of the membrane. The tract at residues 494–529 (GVSEASLETSRETSQEGRSADLETQVPSEPPHSQMY) is disordered. Over residues 502–514 (TSRETSQEGRSAD) the composition is skewed to basic and acidic residues.

Belongs to the potassium channel family. S (TC 1.A.1.2) subfamily. Kv9.1/KCNS1 sub-subfamily. Heterotetramer with KCNB1. Heterotetramer with KCNB2. Does not form homomultimers.

It is found in the cell membrane. In terms of biological role, potassium channel regulatory subunit that modulate the delayed rectifier voltage-gated potassium channel activity of KCNB1 and KCNB2 by altering their kinetics, expression levels, and shifting the half-inactivation potential to more polarized values. While it does not form functional channels on its own, it can form functional heterotetrameric channels with KCNB1 and KCNB2. Each regulatory subunit has unique regulatory properties that can lead to extensive inhibition, significant changes in kinetics, and/or substantial shifts in the voltage dependencies of the inactivation process. The polypeptide is Delayed-rectifier potassium channel regulatory subunit KCNS1 (Aotus nancymaae (Ma's night monkey)).